The chain runs to 133 residues: UPF0344 protein SH1980 (133 aa).

Helical transmembrane passes span 1–21 (MLHM…IAFL), 42–62 (VFML…FMAA), 71–91 (MLLT…EVSI), and 103–123 (LFWA…ILPW).

Belongs to the UPF0344 family.

Its subcellular location is the cell membrane. This Staphylococcus haemolyticus (strain JCSC1435) protein is UPF0344 protein SH1980.